Consider the following 1443-residue polypeptide: ARF guanine-nucleotide exchange factor GNL1 (1443 aa).

The 190-residue stretch at 554 to 743 (FVRKVKHIKK…SEIYHSIRHS (190 aa)) folds into the SEC7 domain. Glu658 is an active-site residue. Disordered regions lie at residues 917-949 (DDPE…AMPR) and 1424-1443 (DQFQ…GNEV). Positions 939–949 (VSQSQPSAMPR) are enriched in polar residues. The segment covering 1425 to 1435 (QFQRRNAKPED) has biased composition (basic and acidic residues).

As to quaternary structure, homodimer.

The protein resides in the cytoplasm. It is found in the cytosol. The protein localises to the golgi apparatus membrane. Functionally, activates the ARF proteins by exchanging bound GDP for free GTP. Plays a role in vesicular protein sorting. Acts as the major regulator of retrograde Golgi to endoplasmic reticulum trafficking but is also involved in the endocytosis process. Could function redundantly with GNOM. Regulates vesicle trafficking required for the coordinated polar localization of auxin efflux carriers which in turn determines the direction of auxin flow. Mediates the endocytosis of PIN2 from plasma membrane to endosomal compartments. Required for maintenance of endoplasmic reticulum morphology. In Arabidopsis thaliana (Mouse-ear cress), this protein is ARF guanine-nucleotide exchange factor GNL1 (GNL1).